We begin with the raw amino-acid sequence, 108 residues long: Protein RnfH (108 aa).

The disordered stretch occupies residues 86-108 (ARRRRAEKAKEEGRANKVTGGRA).

Belongs to the UPF0125 (RnfH) family.

In Pseudoalteromonas atlantica (strain T6c / ATCC BAA-1087), this protein is Protein RnfH.